Reading from the N-terminus, the 391-residue chain is Zinc finger protein ubi-d4 (391 aa).

N-acetylalanine is present on alanine 2. Glycyl lysine isopeptide (Lys-Gly) (interchain with G-Cter in SUMO2) cross-links involve residues lysine 10, lysine 99, lysine 107, and lysine 108. Disordered regions lie at residues tryptophan 79–phenylalanine 146 and aspartate 165–lysine 196. Basic and acidic residues-rich tracts occupy residues proline 100–glycine 110 and aspartate 126–aspartate 140. A Phosphoserine modification is found at serine 142. Residues aspartate 165–glutamate 174 are compositionally biased toward acidic residues. At tyrosine 172 the chain carries Phosphotyrosine. Threonine 176 bears the Phosphothreonine mark. Glycyl lysine isopeptide (Lys-Gly) (interchain with G-Cter in SUMO2) cross-links involve residues lysine 178 and lysine 196. Residue serine 200 is modified to Phosphoserine. A C2H2-type zinc finger spans residues tyrosine 209–histidine 232. Residues leucine 233–leucine 266 form a disordered region. Serine 244 is subject to Phosphoserine. Over residues arginine 253 to proline 263 the composition is skewed to basic and acidic residues. PHD-type zinc fingers lie at residues asparagine 270–cysteine 330 and cysteine 327–leucine 377. Serine 280 is modified (phosphoserine). Lysine 281 is covalently cross-linked (Glycyl lysine isopeptide (Lys-Gly) (interchain with G-Cter in SUMO2)).

This sequence belongs to the requiem/DPF family. Interacts with the nucleosomes, in particular nucleosomes bearing histone H3 crotonylated at 'Lys-14' (H3K14cr) for which DPF2 has high affinity. Also interacts (via PHD-type zinc finger domains) with histone H3 butyrylated at 'Lys-14' (H3K14bu), histone H3 propionylated at 'Lys-14' (H3K14pr), and histone H3 acetylated at 'Lys-14' (H3K14ac). Interacts with histone H3 acetylated at 'Lys-9' (H3K9ac), histone H3 di-methylated at 'Lys-9' (H3K9me2), and histone H3 tri-methylated at 'Lys-9' (H3K9me3). Interacts with histone H4 acetylated at 'Lys-12' (H4K12ac). Interacts with histone H4 acetylated at 'Lys-16' (H4K16ac). Interacts with SWI/SNF complex components. Interacts with SMARCA2, SMARCA4, SMARCB1 and SMARCD1. Interacts with SMARCC1, SMARCC2 and ACTL6A. Interacts with RUNX1. In terms of tissue distribution, ubiquitous.

Its subcellular location is the nucleus. It is found in the cytoplasm. Functionally, plays an active role in transcriptional regulation by binding modified histones H3 and H4. Is a negative regulator of myeloid differentiation of hematopoietic progenitor cells. Might also have a role in the development and maturation of lymphoid cells. Involved in the regulation of non-canonical NF-kappa-B pathway. The polypeptide is Zinc finger protein ubi-d4 (DPF2) (Homo sapiens (Human)).